The chain runs to 1385 residues: Defecation cycle abnormal dec-7 (1385 aa).

A signal peptide spans 1–19 (MWTARHAVALLVVLTYAYS). N-linked (GlcNAc...) asparagine glycosylation occurs at N156. Residues 234–262 (SQTNYGAPNYQQAGAQSAANQQFSNPSQY) form a disordered region. Positions 242-261 (NYQQAGAQSAANQQFSNPSQ) are enriched in low complexity. An NIDO domain is found at 285–450 (QIYGKRKKRQ…GRWIHRVDEV (166 aa)). N313, N386, N413, N458, N480, N562, and N583 each carry an N-linked (GlcNAc...) asparagine glycan. The 160-residue stretch at 681-840 (GRNWPIDMCI…DHCEFYYWRR (160 aa)) folds into the AMOP domain. Residues 852-1088 (AAGYIYGEPH…FWKIDGTNDK (237 aa)) enclose the VWFD domain. N909, N921, N975, N1009, and N1124 each carry an N-linked (GlcNAc...) asparagine glycan. The region spanning 1179–1238 (ISCGPLLKKEGVVKTPPAANYLDGDKVVFSCKPKYYIHGDIERVCRNGTWSPGWWAWCRD) is the Sushi domain. Cystine bridges form between C1181/C1223 and C1209/C1236. N1225 is a glycosylation site (N-linked (GlcNAc...) asparagine). Residues 1251–1271 (LLSIFGISLIFVIFFCILWNI) traverse the membrane as a helical segment. The tract at residues 1321 to 1385 (MNQPSRPIPS…GNMRFETSAI (65 aa)) is disordered.

In terms of tissue distribution, highly expressed in the intestinal epithelia.

It localises to the membrane. The protein resides in the cell junction. Its function is as follows. May negatively regulate activity of innexin gap junction protein inx-16, thereby mediating the rhythmic frequency of the defecation motor program. Required for the clustering of inx-16 to the cell-cell junction of the intestinal epithelia. Probably dispensable for intestinal integrity. May be a cytokine receptor. The chain is Defecation cycle abnormal dec-7 from Caenorhabditis elegans.